Here is a 551-residue protein sequence, read N- to C-terminus: Serine/threonine-protein kinase ppk21 (551 aa).

The segment at 24–43 is disordered; it reads EARGERNPVKPQSSNVVPGT. A Protein kinase domain is found at 55 to 315; the sequence is YVFGDIIGDG…TQQIKQFPFF (261 aa). ATP-binding positions include 65 to 67 and Lys-84; that span reads SFS. Residues 86–131 form a PIF-pocket region; sequence LDKKYIVKENKVKYVNIERDSMMRLNGFPGISRLFHTFQDDLKLYY. ATP-binding positions include 134–136 and Glu-140; that span reads ELA. Asp-179 (proton acceptor) is an active-site residue. Residues Glu-183 and Asp-197 each contribute to the ATP site. Ser-220 bears the Phosphoserine; by autocatalysis mark. Ser-538 carries the post-translational modification Phosphoserine.

Belongs to the protein kinase superfamily. AGC Ser/Thr protein kinase family. PDPK1 subfamily.

The protein resides in the cytoplasm. It localises to the nucleus. Its subcellular location is the cytoskeleton. The protein localises to the microtubule organizing center. It is found in the spindle pole body. The enzyme catalyses L-seryl-[protein] + ATP = O-phospho-L-seryl-[protein] + ADP + H(+). It catalyses the reaction L-threonyl-[protein] + ATP = O-phospho-L-threonyl-[protein] + ADP + H(+). The polypeptide is Serine/threonine-protein kinase ppk21 (ppk21) (Schizosaccharomyces pombe (strain 972 / ATCC 24843) (Fission yeast)).